The sequence spans 377 residues: Serine/threonine-protein phosphatase PP2A-2 catalytic subunit (377 aa).

The tract at residues M1 to K66 is disordered. A compositionally biased stretch (basic and acidic residues) spans D28–D40. Residue S38 is modified to Phosphoserine. T43 carries the phosphothreonine modification. Mn(2+) is bound by residues D125, H127, D153, and N185. The active-site Proton donor is H186. Residues H235 and H309 each contribute to the Mn(2+) site. L377 bears the Leucine methyl ester mark.

It belongs to the PPP phosphatase family. PP-2A subfamily. In terms of assembly, inactivated in a complex with phosphatase methylesterase PPE1 (PP2Ai). Interacts with phosphatase 2A activator RRD2, which can reactivate PP2Ai by dissociating the catalytic subunit from the complex. Interacts with TAP42. The cofactor is Mn(2+). In terms of processing, reversibly methyl esterified on Leu-377 by leucine carboxyl methyltransferase 1 (PPM1) and protein phosphatase methylesterase 1 (PPE1). Carboxyl methylation influences the affinity of the catalytic subunit for the different regulatory subunits, thereby modulating the PP2A holoenzyme's substrate specificity, enzyme activity and cellular localization.

The catalysed reaction is O-phospho-L-seryl-[protein] + H2O = L-seryl-[protein] + phosphate. It catalyses the reaction O-phospho-L-threonyl-[protein] + H2O = L-threonyl-[protein] + phosphate. Functionally, exact function not known, phosphatase 2A performs an essential cellular function. In Saccharomyces cerevisiae (strain ATCC 204508 / S288c) (Baker's yeast), this protein is Serine/threonine-protein phosphatase PP2A-2 catalytic subunit (PPH22).